The following is a 281-amino-acid chain: Probable endonuclease 4 (281 aa).

Positions 69, 109, 145, 179, 182, 216, 229, 231, and 261 each coordinate Zn(2+).

This sequence belongs to the AP endonuclease 2 family. Zn(2+) serves as cofactor.

It catalyses the reaction Endonucleolytic cleavage to 5'-phosphooligonucleotide end-products.. Functionally, endonuclease IV plays a role in DNA repair. It cleaves phosphodiester bonds at apurinic or apyrimidinic (AP) sites, generating a 3'-hydroxyl group and a 5'-terminal sugar phosphate. The polypeptide is Probable endonuclease 4 (Pectobacterium atrosepticum (strain SCRI 1043 / ATCC BAA-672) (Erwinia carotovora subsp. atroseptica)).